The chain runs to 222 residues: Protein-L-isoaspartate O-methyltransferase (222 aa).

The active site involves Ser-68.

The protein belongs to the methyltransferase superfamily. L-isoaspartyl/D-aspartyl protein methyltransferase family.

It is found in the cytoplasm. The catalysed reaction is [protein]-L-isoaspartate + S-adenosyl-L-methionine = [protein]-L-isoaspartate alpha-methyl ester + S-adenosyl-L-homocysteine. Functionally, catalyzes the methyl esterification of L-isoaspartyl residues in peptides and proteins that result from spontaneous decomposition of normal L-aspartyl and L-asparaginyl residues. It plays a role in the repair and/or degradation of damaged proteins. The polypeptide is Protein-L-isoaspartate O-methyltransferase (Koribacter versatilis (strain Ellin345)).